We begin with the raw amino-acid sequence, 472 residues long: SURF6 homolog gldi-11 (472 aa).

Disordered regions lie at residues 53-73, 89-232, 249-350, and 414-472; these read LSKKERKSMSAQQKQHLAKGL, KSKQ…SPEI, KVER…DRAL, and LVKK…GRIL. The span at 95–106 shows a compositional bias: low complexity; that stretch reads KVQPQKVVAPVK. The span at 107–132 shows a compositional bias: basic and acidic residues; that stretch reads RPADQNKNKEKVVKKDQKKQDKKADS. The span at 133-150 shows a compositional bias: acidic residues; sequence DSEEDDSSDDEEKEETDE. The segment covering 151–160 has biased composition (basic and acidic residues); it reads PVAKKQKKEE. Acidic residues-rich tracts occupy residues 161–175 and 182–194; these read SSDDDEDSEDGEEPE and EAEDSDSTDEEEE. A compositionally biased stretch (polar residues) spans 197-210; the sequence is SKPNKTVAQSTLKS. The span at 212–221 shows a compositional bias: basic and acidic residues; the sequence is GKIDKEIQKL. Residues 274–285 are compositionally biased toward basic residues; sequence LKRRESKLKLKQ. Positions 286 to 305 are enriched in basic and acidic residues; that stretch reads RRAEEKKGKEAAAQVKKETV. A compositionally biased stretch (basic residues) spans 414–426; it reads LVKKNKMKDRRKQ. Positions 427 to 443 are enriched in basic and acidic residues; it reads KWENRENKTEGEKQTKQ. The segment covering 459 to 472 has biased composition (basic residues); the sequence is KRKMNKLRNKGRIL.

The protein belongs to the SURF6 family.

It is found in the nucleus. Its subcellular location is the nucleoplasm. Binds to both DNA and RNA in vitro, with a stronger binding capacity for RNA. May represent a nucleolar constitutive protein involved in ribosomal biosynthesis or assembly. The polypeptide is SURF6 homolog gldi-11 (Caenorhabditis elegans).